Reading from the N-terminus, the 187-residue chain is MSRPLKVVALSGGTWRPSRTLVLTQALLAELSGHLPIESHLIELGDIARPLGAALSRQELPAEIEAELQAIEQADLLIVAAPVYRGSYPGLLKHLFDLIDLNALIDTPVLLAATGGSERHALVLDHQLRPLFSFFQAVTLPIGVYATEADFADYQITSEPLKARIRLAAERAAPLFGTHLKPLLKIA.

This sequence belongs to the SsuE family.

It carries out the reaction FMNH2 + NAD(+) = FMN + NADH + 2 H(+). Functionally, involved in the dimethyl sulfide degradation pathway. Catalyzes the NADH-dependent reduction of FMN. The polypeptide is NADH-dependent FMN reductase SfnF (Pseudomonas fluorescens (strain Pf0-1)).